The chain runs to 377 residues: Carboxynorspermidine/carboxyspermidine decarboxylase (377 aa).

At K41 the chain carries N6-(pyridoxal phosphate)lysine. 2 residues coordinate substrate: E238 and D274.

The protein belongs to the Orn/Lys/Arg decarboxylase class-II family. NspC subfamily. As to quaternary structure, homodimer. Pyridoxal 5'-phosphate is required as a cofactor.

It localises to the cytoplasm. It catalyses the reaction carboxynorspermidine + H(+) = norspermidine + CO2. The enzyme catalyses carboxyspermidine + H(+) = spermidine + CO2. Catalyzes the decarboxylation of carboxynorspermidine and carboxyspermidine. Carboxynorspermidine is decarboxylated 20-fold more efficiently than carboxyspermidine. Exhibits some activity with L-ornithine, but shows no activity with L-arginine, L-lysine or meso-diaminopimelate. This is Carboxynorspermidine/carboxyspermidine decarboxylase from Vibrio vulnificus (strain CMCP6).